Here is a 141-residue protein sequence, read N- to C-terminus: Large ribosomal subunit protein uL11 (141 aa).

The protein belongs to the universal ribosomal protein uL11 family. Part of the ribosomal stalk of the 50S ribosomal subunit. Interacts with L10 and the large rRNA to form the base of the stalk. L10 forms an elongated spine to which L12 dimers bind in a sequential fashion forming a multimeric L10(L12)X complex. Post-translationally, one or more lysine residues are methylated.

Forms part of the ribosomal stalk which helps the ribosome interact with GTP-bound translation factors. This chain is Large ribosomal subunit protein uL11, found in Wolinella succinogenes (strain ATCC 29543 / DSM 1740 / CCUG 13145 / JCM 31913 / LMG 7466 / NCTC 11488 / FDC 602W) (Vibrio succinogenes).